The following is a 218-amino-acid chain: Redox-sensing transcriptional repressor Rex (218 aa).

The segment at residues 25–64 (WYLSYVQLLHADGCESVSSTRIARAVGVDASLVAKDLSYV) is a DNA-binding region (H-T-H motif). 99–104 (GVGSLG) is an NAD(+) binding site.

Belongs to the transcriptional regulatory Rex family. As to quaternary structure, homodimer.

The protein resides in the cytoplasm. Functionally, modulates transcription in response to changes in cellular NADH/NAD(+) redox state. This Porphyromonas gingivalis (strain ATCC 33277 / DSM 20709 / CIP 103683 / JCM 12257 / NCTC 11834 / 2561) protein is Redox-sensing transcriptional repressor Rex.